Here is a 312-residue protein sequence, read N- to C-terminus: Short chain dehydrogenase pgmD (312 aa).

Residues V46, I47, K171, Y207, K211, and T242 each contribute to the NADP(+) site. Residue Y207 is the Proton donor of the active site. The active-site Lowers pKa of active site Tyr is the K211.

Belongs to the short-chain dehydrogenases/reductases (SDR) family.

It participates in pigment biosynthesis. Its pathway is secondary metabolite biosynthesis. Short chain dehydrogenase; part of the gene cluster that mediates the biosynthesis of pleosporalin A, ascomycone A, as well as a third cryptic naphthoquinone derived pigment, all responsible for the coloration of conidia. Essential for the production of pleosporalin A, but not the 2 other final products. The pathway begins with the biosynthesis of the cyclized heptaketide 3-acetonyl-1,6,8-trihydroxy-2-naphthaldehyde by the NR-PKS pgmA. The C-6 hydroxyl group is further methylated by the O-methyltransferase pgmB to yield fusarubinaldehyde which is in turn oxidized by the cytochrome P450 monooxygenase pgmC at C-9. The C-1 hydroxyl group is then methylated spontaneously. Although pgmE, pgmD and pgmH are essential for the production of pleosporalin A, it is not the case for the 2 other final products and it remains difficult to assign a specific function to each enzyme. PgmF and pgmG seem not to be involved in pigment biosynthesis although they were regulated by the cluster-specific transcription factor pgmR. This Aspergillus terreus (strain NIH 2624 / FGSC A1156) protein is Short chain dehydrogenase pgmD.